Here is a 254-residue protein sequence, read N- to C-terminus: HTH-type transcriptional regulator GolR (254 aa).

The HTH deoR-type domain maps to 3–58; the sequence is PFERQNKIIHLLDQNNKITVPELSRILDVSISTIRNDLSALEESGMIKKVHGGAVL. Residues 20–39 constitute a DNA-binding region (H-T-H motif); sequence ITVPELSRILDVSISTIRND.

Its function is as follows. Involved in the glycerol metabolism. Repressor of the gol operon for glycerol metabolism. This Listeria innocua serovar 6a (strain ATCC BAA-680 / CLIP 11262) protein is HTH-type transcriptional regulator GolR.